Reading from the N-terminus, the 60-residue chain is Regulatory protein DegR (60 aa).

Stabilizes the phosphorylated form of DegU, leading to enhanced production of levansucrase, alkaline protease, and neutral protease. In Bacillus subtilis subsp. natto, this protein is Regulatory protein DegR (degR).